The primary structure comprises 697 residues: Serotransferrin (697 aa).

Positions M1–A19 are cleaved as a signal peptide. Transferrin-like domains lie at V25 to E347 and V360 to K682. 2 disulfides stabilise this stretch: C28–C67 and C38–C58. R42 carries the dimethylated arginine modification. Fe(3+)-binding residues include D82 and Y114. Cystine bridges form between C137-C213, C156-C350, C177-C193, C180-C196, C190-C198, C246-C260, C363-C395, and C373-C386. T139, R143, A145, and G146 together coordinate hydrogencarbonate. Y207 lines the Fe(3+) pocket. Residue H268 coordinates Fe(3+). S388 carries the phosphoserine modification. D410 and Y448 together coordinate Fe(3+). Intrachain disulfides connect C420–C692, C435–C655, C472–C543, C496–C683, C506–C520, C517–C526, C583–C597, and C633–C638. Residues T474, R478, A480, and G481 each coordinate hydrogencarbonate. N513 carries an N-linked (GlcNAc...) asparagine glycan. Fe(3+) is bound at residue Y537. Residue H605 participates in Fe(3+) binding. S684 is modified (phosphoserine).

Belongs to the transferrin family. As to quaternary structure, monomer. Part of a complex composed of SLC40A1/ferroportin, TF/transferrin and HEPH/hephaestin that transfers iron from cells to transferrin. In terms of tissue distribution, expressed by the liver and secreted in plasma.

Its subcellular location is the secreted. Its function is as follows. Transferrins are iron binding transport proteins which can bind two Fe(3+) ions in association with the binding of an anion, usually bicarbonate. It is responsible for the transport of iron from sites of absorption and heme degradation to those of storage and utilization. Serum transferrin may also have a further role in stimulating cell proliferation. The polypeptide is Serotransferrin (Tf) (Mus musculus (Mouse)).